We begin with the raw amino-acid sequence, 1420 residues long: DNA-directed RNA polymerase subunit beta' (1420 aa).

Positions 71, 73, 86, and 89 each coordinate Zn(2+). Positions 461, 463, and 465 each coordinate Mg(2+). 4 residues coordinate Zn(2+): cysteine 815, cysteine 889, cysteine 896, and cysteine 899.

It belongs to the RNA polymerase beta' chain family. The RNAP catalytic core consists of 2 alpha, 1 beta, 1 beta' and 1 omega subunit. When a sigma factor is associated with the core the holoenzyme is formed, which can initiate transcription. Mg(2+) is required as a cofactor. The cofactor is Zn(2+).

The catalysed reaction is RNA(n) + a ribonucleoside 5'-triphosphate = RNA(n+1) + diphosphate. DNA-dependent RNA polymerase catalyzes the transcription of DNA into RNA using the four ribonucleoside triphosphates as substrates. This is DNA-directed RNA polymerase subunit beta' from Histophilus somni (strain 129Pt) (Haemophilus somnus).